The sequence spans 387 residues: 3-ketoacyl-CoA thiolase (387 aa).

Cys91 functions as the Acyl-thioester intermediate in the catalytic mechanism. Active-site proton acceptor residues include His343 and Cys373.

Belongs to the thiolase-like superfamily. Thiolase family. In terms of assembly, heterotetramer of two alpha chains (FadB) and two beta chains (FadA).

It localises to the cytoplasm. The enzyme catalyses an acyl-CoA + acetyl-CoA = a 3-oxoacyl-CoA + CoA. Its pathway is lipid metabolism; fatty acid beta-oxidation. Catalyzes the final step of fatty acid oxidation in which acetyl-CoA is released and the CoA ester of a fatty acid two carbons shorter is formed. This is 3-ketoacyl-CoA thiolase from Shewanella baltica (strain OS185).